We begin with the raw amino-acid sequence, 499 residues long: Lanosterol 14-alpha demethylase (499 aa).

A helical membrane pass occupies residues 13 to 35 (SAVLQMSLTSVLLTASVFTLTLG). Heme is bound at residue C441.

It belongs to the cytochrome P450 family. Heme serves as cofactor. In terms of tissue distribution, strongly expressed in intestine. Moderately expressed in liver, with higher levels in females compared to males. Also detected at low levels in brain, eye, kidney and testis.

The protein localises to the endoplasmic reticulum membrane. Its subcellular location is the membrane. The catalysed reaction is a 14alpha-methyl steroid + 3 reduced [NADPH--hemoprotein reductase] + 3 O2 = a Delta(14) steroid + formate + 3 oxidized [NADPH--hemoprotein reductase] + 4 H2O + 4 H(+). It carries out the reaction lanosterol + 3 reduced [NADPH--hemoprotein reductase] + 3 O2 = 4,4-dimethyl-5alpha-cholesta-8,14,24-trien-3beta-ol + formate + 3 oxidized [NADPH--hemoprotein reductase] + 4 H2O + 4 H(+). It catalyses the reaction 24,25-dihydrolanosterol + 3 reduced [NADPH--hemoprotein reductase] + 3 O2 = 4,4-dimethyl-8,14-cholestadien-3beta-ol + formate + 3 oxidized [NADPH--hemoprotein reductase] + 4 H2O + 4 H(+). The enzyme catalyses a 14alpha-methyl steroid + reduced [NADPH--hemoprotein reductase] + O2 = a 14alpha-hydroxymethyl steroid + oxidized [NADPH--hemoprotein reductase] + H2O + H(+). The catalysed reaction is a 14alpha-hydroxymethyl steroid + reduced [NADPH--hemoprotein reductase] + O2 = a 14alpha-formyl steroid + oxidized [NADPH--hemoprotein reductase] + 2 H2O + H(+). It carries out the reaction a 14alpha-formyl steroid + reduced [NADPH--hemoprotein reductase] + O2 = a Delta(14) steroid + formate + oxidized [NADPH--hemoprotein reductase] + H2O + 2 H(+). It catalyses the reaction lanosterol + reduced [NADPH--hemoprotein reductase] + O2 = 32-hydroxylanosterol + oxidized [NADPH--hemoprotein reductase] + H2O + H(+). The enzyme catalyses 32-hydroxylanosterol + reduced [NADPH--hemoprotein reductase] + O2 = 32-oxolanosterol + oxidized [NADPH--hemoprotein reductase] + 2 H2O + H(+). The catalysed reaction is 32-oxolanosterol + reduced [NADPH--hemoprotein reductase] + O2 = 4,4-dimethyl-5alpha-cholesta-8,14,24-trien-3beta-ol + formate + oxidized [NADPH--hemoprotein reductase] + H2O + 2 H(+). It carries out the reaction 24,25-dihydrolanosterol + reduced [NADPH--hemoprotein reductase] + O2 = 32-hydroxy-24,25-dihydrolanosterol + oxidized [NADPH--hemoprotein reductase] + H2O + H(+). It catalyses the reaction 32-hydroxy-24,25-dihydrolanosterol + reduced [NADPH--hemoprotein reductase] + O2 = 32-oxo-24,25-dihydrolanosterol + oxidized [NADPH--hemoprotein reductase] + 2 H2O + H(+). The enzyme catalyses 32-oxo-24,25-dihydrolanosterol + reduced [NADPH--hemoprotein reductase] + O2 = 4,4-dimethyl-8,14-cholestadien-3beta-ol + formate + oxidized [NADPH--hemoprotein reductase] + H2O + 2 H(+). It participates in steroid biosynthesis; zymosterol biosynthesis; zymosterol from lanosterol: step 1/6. Inhibited by ketoconazole. May also be inhibited to a lesser extent by propiconazole. In terms of biological role, sterol 14alpha-demethylase that plays a critical role in the cholesterol biosynthesis pathway, being cholesterol the major sterol component in deuterostome membranes as well as a precursor for steroid hormone synthesis. Cytochrome P450 monooxygenase that catalyzes the three-step oxidative removal of the 14alpha-methyl group (C-32) of sterols such as lanosterol (lanosta-8,24-dien-3beta-ol) and 24,25-dihydrolanosterol (DHL) in the form of formate, and converts the sterols to 4,4-dimethyl-5alpha-cholesta-8,14,24-trien-3beta-ol and 4,4-dimethyl-8,14-cholestadien-3beta-ol, respectively, which are intermediates of cholesterol biosynthesis. Can also demethylate substrates not intrinsic to deuterostomes, such as eburicol (24-methylene-24,25-dihydrolanosterol), but at a lower rate than DHL. This Danio rerio (Zebrafish) protein is Lanosterol 14-alpha demethylase.